A 108-amino-acid chain; its full sequence is uncharacterized protein (108 aa).

A compositionally biased stretch (polar residues) spans 1–15 (MSDSNSRLVYSTQTG). A disordered region spans residues 1–29 (MSDSNSRLVYSTQTGRIEEPKTAPVRPKG). Positions 16 to 29 (RIEEPKTAPVRPKG) are enriched in basic and acidic residues.

It belongs to the SUI1 family.

This is an uncharacterized protein from Salmonella typhi.